The primary structure comprises 160 residues: Protein FrzA (160 aa).

Residues 14–155 (EQEFFCFRVG…FSKLLQTARQ (142 aa)) form the CheW-like domain.

Its function is as follows. Necessary for proper aggregation of cells to form fruiting bodies. FRZ genes define a system of signal transduction analogous to the enterobacterial chemotaxis systems. The protein is Protein FrzA (frzA) of Myxococcus xanthus.